Here is a 420-residue protein sequence, read N- to C-terminus: Dynein axonemal assembly factor 4 (420 aa).

The region spanning 3-87 is the CS domain; it reads VRVSEFSWQQ…KEPVLWDSLS (85 aa). The mediates interaction with ESR1 and STUB1 stretch occupies residues 7-103; the sequence is EFSWQQTPAT…EMMQRIREKS (97 aa). Basic and acidic residues predominate over residues 164 to 192; that stretch reads ECQKKADGQKRVQRKEKPLEGKQAEETKA. The tract at residues 164-212 is disordered; that stretch reads ECQKKADGQKRVQRKEKPLEGKQAEETKALKPRGLPRKAPPTRLPTRGR. 3 TPR repeats span residues 288-321, 322-355, and 364-397; these read PDWLKDKGNKLFATENYLAAVDAYNLAIRLNCKI, PLLYLNRAACHLKLKNLHKAIEDSSKALELLTPP, and MKAHVRRGTAFCQLELYVEGLQDYEAALKIDPAN.

Interacts with ZMYND10. Interacts with ESR1 and ESR2. Interacts with STUB1. Interacts with DNAAF2. Interacts with CCT3, CCT4, CCT5 and CCT8. Interacts with DNAAF6/PIH1D3.

It localises to the nucleus. The protein localises to the cytoplasm. It is found in the dynein axonemal particle. The protein resides in the cell projection. Its subcellular location is the neuron projection. Involved in neuronal migration during development of the cerebral neocortex. May regulate the stability and proteasomal degradation of the estrogen receptors that play an important role in neuronal differentiation, survival and plasticity. Axonemal dynein assembly factor required for ciliary motility. The chain is Dynein axonemal assembly factor 4 from Mus musculus (Mouse).